Here is a 645-residue protein sequence, read N- to C-terminus: Sentrin-specific protease 1 (645 aa).

The tract at residues 1–200 (MDDIADRMRM…REIYRQLLQM (200 aa)) is interaction with CCAR2. A phosphoserine mark is found at S57, S117, and S157. Residues 92–117 (QSANGQWRNSTPSSSSSLQKSRNSRS) are disordered. The span at 99-117 (RNSTPSSSSSLQKSRNSRS) shows a compositional bias: low complexity. The Nuclear localization signal motif lies at 171 to 177 (PKKTQRR). Positions 285-313 (KDSGTLHHPHHHHSVPHQPDNLAASNTQS) are disordered. Protease regions lie at residues 451–614 (LTIT…YADC) and 451–615 (LTIT…ADCI). Catalysis depends on residues H534 and D551. Residues 575 to 578 (KKRK) carry the Nuclear localization signal motif. Catalysis depends on C604, which acts as the Nucleophile. The Nuclear localization signal motif lies at 629–635 (PYFRKRM). The short motif at 636 to 645 (VWEILHRKLL) is the Nuclear export signal element.

It belongs to the peptidase C48 family. Interacts with RBM33; promoting ALKBH5 desumoylation and subsequent activation.

Its subcellular location is the nucleus. The protein resides in the cytoplasm. Functionally, protease that catalyzes two essential functions in the SUMO pathway. The first is the hydrolysis of an alpha-linked peptide bond at the C-terminal end of the small ubiquitin-like modifier (SUMO) propeptides, SUMO1, SUMO2 and SUMO3 leading to the mature form of the proteins. The second is the deconjugation of SUMO1, SUMO2 and SUMO3 from targeted proteins, by cleaving an epsilon-linked peptide bond between the C-terminal glycine of the mature SUMO and the lysine epsilon-amino group of the target protein. Deconjugates SUMO1 from HIPK2. Deconjugates SUMO1 from HDAC1 and BHLHE40/DEC1, which decreases its transcriptional repression activity. Deconjugates SUMO1 from CLOCK, which decreases its transcriptional activation activity. Deconjugates SUMO2 from MTA1. Inhibits N(6)-methyladenosine (m6A) RNA methylation by mediating SUMO1 deconjugation from METTL3 and ALKBH5: METTL3 inhibits the m6A RNA methyltransferase activity, while ALKBH5 desumoylation promotes m6A demethylation. Desumoylates CCAR2 which decreases its interaction with SIRT1. Deconjugates SUMO1 from GPS2. The sequence is that of Sentrin-specific protease 1 (SENP1) from Pongo abelii (Sumatran orangutan).